A 131-amino-acid chain; its full sequence is UPF0102 protein YraN (131 aa).

It belongs to the UPF0102 family.

The polypeptide is UPF0102 protein YraN (Salmonella agona (strain SL483)).